We begin with the raw amino-acid sequence, 148 residues long: SsrA-binding protein (148 aa).

Belongs to the SmpB family.

The protein localises to the cytoplasm. Required for rescue of stalled ribosomes mediated by trans-translation. Binds to transfer-messenger RNA (tmRNA), required for stable association of tmRNA with ribosomes. tmRNA and SmpB together mimic tRNA shape, replacing the anticodon stem-loop with SmpB. tmRNA is encoded by the ssrA gene; the 2 termini fold to resemble tRNA(Ala) and it encodes a 'tag peptide', a short internal open reading frame. During trans-translation Ala-aminoacylated tmRNA acts like a tRNA, entering the A-site of stalled ribosomes, displacing the stalled mRNA. The ribosome then switches to translate the ORF on the tmRNA; the nascent peptide is terminated with the 'tag peptide' encoded by the tmRNA and targeted for degradation. The ribosome is freed to recommence translation, which seems to be the essential function of trans-translation. This is SsrA-binding protein from Burkholderia ambifaria (strain ATCC BAA-244 / DSM 16087 / CCUG 44356 / LMG 19182 / AMMD) (Burkholderia cepacia (strain AMMD)).